Here is a 694-residue protein sequence, read N- to C-terminus: Elongation factor G (694 aa).

Positions 8-287 (EDYRNFGIMA…AVVEFLPAPT (280 aa)) constitute a tr-type G domain. GTP contacts are provided by residues 17 to 24 (AHIDAGKT), 86 to 90 (DTPGH), and 140 to 143 (NKMD).

It belongs to the TRAFAC class translation factor GTPase superfamily. Classic translation factor GTPase family. EF-G/EF-2 subfamily.

The protein localises to the cytoplasm. Functionally, catalyzes the GTP-dependent ribosomal translocation step during translation elongation. During this step, the ribosome changes from the pre-translocational (PRE) to the post-translocational (POST) state as the newly formed A-site-bound peptidyl-tRNA and P-site-bound deacylated tRNA move to the P and E sites, respectively. Catalyzes the coordinated movement of the two tRNA molecules, the mRNA and conformational changes in the ribosome. This is Elongation factor G from Brucella suis (strain ATCC 23445 / NCTC 10510).